A 295-amino-acid chain; its full sequence is Geranylfarnesyl diphosphate synthase (295 aa).

Lys51, Arg54, and His83 together coordinate isopentenyl diphosphate. Mg(2+) is bound by residues Asp90 and Asp94. Residue Arg99 participates in an all-trans-polyprenyl diphosphate binding. An isopentenyl diphosphate-binding site is contributed by Arg100. An all-trans-polyprenyl diphosphate contacts are provided by Lys174, Thr175, and Gln212.

This sequence belongs to the FPP/GGPP synthase family. Homodimer. Mg(2+) serves as cofactor.

The enzyme catalyses isopentenyl diphosphate + (2E,6E,10E)-geranylgeranyl diphosphate = (2E,6E,10E,14E)-geranylfarnesyl diphosphate + diphosphate. Its function is as follows. Involved in biosynthesis of the polyprenyl side-chain of methanophenazine, an electron carrier utilized for methanogenesis. Catalyzes the condensation of isopentenyl pyrophosphate with the allylic pyrophosphates to yield geranylfarnesyl diphosphate (GFPP). It prefers geranylgeranyl diphosphate (GGPP) and farnesyl diphosphate (FPP) as allylic substrate. The polypeptide is Geranylfarnesyl diphosphate synthase (Methanosarcina mazei (strain ATCC BAA-159 / DSM 3647 / Goe1 / Go1 / JCM 11833 / OCM 88) (Methanosarcina frisia)).